The primary structure comprises 176 residues: Cell division protein ZapC (176 aa).

This sequence belongs to the ZapC family. Interacts directly with FtsZ.

It is found in the cytoplasm. Functionally, contributes to the efficiency of the cell division process by stabilizing the polymeric form of the cell division protein FtsZ. Acts by promoting interactions between FtsZ protofilaments and suppressing the GTPase activity of FtsZ. The sequence is that of Cell division protein ZapC from Pseudoalteromonas translucida (strain TAC 125).